The primary structure comprises 393 residues: Upstream-binding factor 1-like protein 1 (393 aa).

2 DNA-binding regions (HMG box) span residues 100 to 168 and 222 to 288; these read PKRP…ARFR and QKPP…DLWL. Residues 308–393 are disordered; the sequence is KNMAMTGGPD…SSGEEIEVDV (86 aa). Residues 365 to 377 show a composition bias toward basic and acidic residues; sequence EENRKKDREKEES.

The protein localises to the cytoplasm. Its subcellular location is the nucleus. In terms of biological role, essential for proliferation of the inner cell mass and trophectodermal cells in peri-implantation development. This is Upstream-binding factor 1-like protein 1 from Homo sapiens (Human).